We begin with the raw amino-acid sequence, 224 residues long: MLRHITFTVFITTSMNTLATGMVPETSVLLVDEKRGEASINIKNTDDHPSLLYTTIVDLPESNKSIRLIPTQPVIRVEAGQVQQVRFLLQATVPLQSEELKRVTFEGIPPKDDKSSRVTVSIRQDLPVLIHPASLPEERETWKFLEWRKNGDQIEISNPSNYVVRMTLQFKTLPSGKTGAINKTYFLPHTSTTTALTNATDTKVEFYPASRYGYRGNKYVTDLK.

A signal peptide spans 1-19 (MLRHITFTVFITTSMNTLA).

The protein belongs to the periplasmic pilus chaperone family.

It is found in the periplasm. Could be required for the biogenesis of a putative fimbria. This is an uncharacterized protein from Escherichia coli (strain K12).